We begin with the raw amino-acid sequence, 320 residues long: Ferrochelatase (320 aa).

Fe cation is bound by residues H194 and E275.

Belongs to the ferrochelatase family. Monomer.

It is found in the cytoplasm. It carries out the reaction heme b + 2 H(+) = protoporphyrin IX + Fe(2+). It participates in porphyrin-containing compound metabolism; protoheme biosynthesis; protoheme from protoporphyrin-IX: step 1/1. Catalyzes the ferrous insertion into protoporphyrin IX. This Shigella dysenteriae serotype 1 (strain Sd197) protein is Ferrochelatase.